The sequence spans 147 residues: Hemoglobin subunit gamma-1 (147 aa).

At Gly-2 the chain carries N-acetylglycine. A Globin domain is found at 3–147; it reads HFTEEDKATI…VASALSSRYH (145 aa). Thr-13 carries the phosphothreonine modification. A phosphoserine mark is found at Ser-45, Ser-51, and Ser-53. An N6-acetyllysine modification is found at Lys-60. His-64 provides a ligand contact to heme b. Position 83 is an N6-acetyllysine (Lys-83). His-93 is a binding site for heme b. The residue at position 94 (Cys-94) is an S-nitrosocysteine. At Ser-140 the chain carries Phosphoserine.

The protein belongs to the globin family. Heterotetramer of two alpha chains and two gamma chains in fetal hemoglobin (Hb F). The ratio of gamma-G to gamma-A chains in is approximately 2:1 in infant chimpanzee, and 1:2 in the adult. Red blood cells.

In terms of biological role, gamma chains make up the fetal hemoglobin F, in combination with alpha chains. This is Hemoglobin subunit gamma-1 (HBG1) from Pan troglodytes (Chimpanzee).